We begin with the raw amino-acid sequence, 468 residues long: Chromatin assembly factor 1 subunit B (468 aa).

5 WD repeats span residues 11–52 (HDSQ…NGQN), 69–108 (HHEQAINVIRFNSKGDVLASAGDDGQVLLWKQEDPNTQQE), 143–182 (TAAAEIYDLAWSPDNRNIVVACMDNSIRLFDVGAGMLVCG), 185–224 (DHGHYVQGVAWDPLNQFILSQSADRSLHVYGVILSSAGVV), and 371–413 (IHYS…SRIE).

It belongs to the WD repeat HIR1 family. Component of chromatin assembly factor 1 (CAF-1), composed of MSI1/p50, CAC2/p60 and CAC1/p90. Interacts with RTT106.

The protein resides in the nucleus. In terms of biological role, acts as a component of the histone chaperone complex chromatin assembly factor 1 (CAF-1), which assembles histone octamers onto replicating DNA. It performs the first step of the nucleosome assembly process, bringing newly synthesized histones H3 and H4 to replicating DNA; histones H2A/H2B can bind to this chromatin precursor subsequent to DNA replication to complete the histone octamer. Plays a role in the maintenance of heterochromatin. This is Chromatin assembly factor 1 subunit B (CAC2) from Saccharomyces cerevisiae (strain ATCC 204508 / S288c) (Baker's yeast).